Reading from the N-terminus, the 247-residue chain is MGRGKIEVKRIENNTSRQVTFSKRRSGLMKKTHELSVLCDAQIGLIVFSTKGKLTEYCTPPFSMKQIIDRYVKAKGILPEMENRAGPHADNDQVIKELTRMKEETLNLQLNLQRYKGDDLSTVRFEELTELEKLLDQSLNKVRARKLELLHEQMENLKRTEFMLEKENQEMYHWLMSNQIQRQAEVEHHHQQQVMTELKLVEQQQPLMNEFPFFGEDLHLGTLPLLDTHSYRLQPTQPNLQDPAQIN.

One can recognise an MADS-box domain in the interval 1–61 (MGRGKIEVKR…GKLTEYCTPP (61 aa)). The K-box domain maps to 91 to 183 (NDQVIKELTR…WLMSNQIQRQ (93 aa)).

Expressed exclusively in a few inner cell layers of the inner integuments of the ovules.

It localises to the nucleus. Probable transcription factor. The polypeptide is MADS-box protein defh21 (DEFH21) (Antirrhinum majus (Garden snapdragon)).